The chain runs to 615 residues: Chaperone protein DnaK (615 aa).

Thr175 carries the post-translational modification Phosphothreonine; by autocatalysis. The interval 573-615 (SQEMYQKAAQEQQAAQGAEQAQDNGPKDDNVVDADFKEVDEDK) is disordered. The segment covering 580–594 (AAQEQQAAQGAEQAQ) has biased composition (low complexity). A compositionally biased stretch (basic and acidic residues) spans 597 to 609 (GPKDDNVVDADFK).

This sequence belongs to the heat shock protein 70 family.

Its function is as follows. Acts as a chaperone. The sequence is that of Chaperone protein DnaK from Clostridioides difficile (strain 630) (Peptoclostridium difficile).